A 436-amino-acid chain; its full sequence is Envelope glycoprotein (436 aa).

M1 is a signal peptide. Topologically, residues 2-436 (ANPSPHQIYN…GGLTVGGIAA (435 aa)) are extracellular. N-linked (GlcNAc...) asparagine; by host glycans are attached at residues N11 and N26. 2 disulfides stabilise this stretch: C95–C117 and C109–C122. Residues 203-255 (PPQAMGPNLVLPDQKPPSRQSQTGSKVATQRPQTNESAPRSVGPTTMGPKRIG) form a disordered region. Residues 219–240 (PSRQSQTGSKVATQRPQTNESA) show a composition bias toward polar residues. N-linked (GlcNAc...) asparagine; by host glycosylation is found at N237, N272, and N277. A CXXC motif is present at residues 282 to 285 (CWLC). N-linked (GlcNAc...) asparagine; by host glycosylation is found at N304, N344, N360, and N380.

As to quaternary structure, the mature envelope protein (Env) consists of a trimer of SU-TM heterodimers attached by a labile interchain disulfide bond. Post-translationally, specific enzymatic cleavages in vivo yield mature proteins. Envelope glycoproteins are synthesized as an inactive precursor that is N-glycosylated and processed likely by host cell furin or by a furin-like protease in the Golgi to yield the mature SU and TM proteins. The cleavage site between SU and TM requires the minimal sequence [KR]-X-[KR]-R.

It localises to the virion membrane. It is found in the host cell membrane. In terms of biological role, the surface protein (SU) attaches the virus to the host cell by binding to its receptor. This interaction triggers the refolding of the transmembrane protein (TM) and is thought to activate its fusogenic potential by unmasking its fusion peptide. Fusion occurs at the host cell plasma membrane. The transmembrane protein (TM) acts as a class I viral fusion protein. Under the current model, the protein has at least 3 conformational states: pre-fusion native state, pre-hairpin intermediate state, and post-fusion hairpin state. During viral and target cell membrane fusion, the coiled coil regions (heptad repeats) assume a trimer-of-hairpins structure, positioning the fusion peptide in close proximity to the C-terminal region of the ectodomain. The formation of this structure appears to drive apposition and subsequent fusion of viral and target cell membranes. Membranes fusion leads to delivery of the nucleocapsid into the cytoplasm. In Feline leukemia virus (strain C/FS246), this protein is Envelope glycoprotein.